A 685-amino-acid chain; its full sequence is Small ribosomal subunit protein mS39 (685 aa).

The transit peptide at 1–10 directs the protein to the mitochondrion; the sequence is MAAAAVAARR. K127 carries the post-translational modification N6-acetyllysine. PPR repeat units lie at residues 150 to 184, 185 to 220, 254 to 288, 289 to 329, 330 to 366, 367 to 407, 412 to 446, 454 to 488, 489 to 523, and 572 to 606; these read IEDVSEAALEERIRLRKVRASVDMFDQLLQAGTTV, SLETTNSLLDLLCYYGDQEPPADYPFQQTEHLENLE, NARSYCTMIRGMVKHRAYAQALNVYTELLNNRLSA, DVYT…KVKP, NLQTFNTILKGLRKCYSLGRIPALQILREMKHIGIEP, SLAT…TFSP, DGRFFQLAMSVCSSLRDLELAYQVHRLLNTGDNRK, RKVYYSKFFSLICSLEQIDVTLKWYKDLIPSVFLP, HYQIFIGLLQALDVANRLELVPQIWKDSKEYSHTF, and PANPLQYIAVLFLRGGRSQEAWKMLELFKKHKKIP. A disordered region spans residues 663-685; the sequence is LGNLTELNSSDGESSSDSDSDDK. A compositionally biased stretch (acidic residues) spans 676-685; sequence SSSDSDSDDK.

This sequence belongs to the mitochondrion-specific ribosomal protein mS39 family. As to quaternary structure, component of the mitochondrial ribosome small subunit (28S) which comprises a 12S rRNA and about 30 distinct proteins. Associated with the 12S mitochondrial rRNA (12S mt-rRNA).

Its subcellular location is the mitochondrion. Its function is as follows. Mitochondrial RNA-binding protein that has a role in mitochondrial translation. This Mus musculus (Mouse) protein is Small ribosomal subunit protein mS39 (Ptcd3).